A 236-amino-acid polypeptide reads, in one-letter code: Protein-L-isoaspartate O-methyltransferase 1 (236 aa).

Ser-85 is an active-site residue.

It belongs to the methyltransferase superfamily. L-isoaspartyl/D-aspartyl protein methyltransferase family.

It localises to the cytoplasm. It catalyses the reaction [protein]-L-isoaspartate + S-adenosyl-L-methionine = [protein]-L-isoaspartate alpha-methyl ester + S-adenosyl-L-homocysteine. Catalyzes the methyl esterification of L-isoaspartyl residues in peptides and proteins that result from spontaneous decomposition of normal L-aspartyl and L-asparaginyl residues. It plays a role in the repair and/or degradation of damaged proteins. In Polaromonas sp. (strain JS666 / ATCC BAA-500), this protein is Protein-L-isoaspartate O-methyltransferase 1.